A 155-amino-acid polypeptide reads, in one-letter code: Small ribosomal subunit protein uS7c (155 aa).

Belongs to the universal ribosomal protein uS7 family. In terms of assembly, part of the 30S ribosomal subunit.

It is found in the plastid. Its subcellular location is the chloroplast. One of the primary rRNA binding proteins, it binds directly to 16S rRNA where it nucleates assembly of the head domain of the 30S subunit. This chain is Small ribosomal subunit protein uS7c (rps7), found in Pinus koraiensis (Korean pine).